The sequence spans 219 residues: NAD(P)H-quinone oxidoreductase subunit K 2 (219 aa).

Residues C53, C54, C118, and C149 each contribute to the [4Fe-4S] cluster site.

It belongs to the complex I 20 kDa subunit family. As to quaternary structure, NDH-1 can be composed of about 15 different subunits; different subcomplexes with different compositions have been identified which probably have different functions. It depends on [4Fe-4S] cluster as a cofactor.

The protein resides in the cellular thylakoid membrane. It carries out the reaction a plastoquinone + NADH + (n+1) H(+)(in) = a plastoquinol + NAD(+) + n H(+)(out). The enzyme catalyses a plastoquinone + NADPH + (n+1) H(+)(in) = a plastoquinol + NADP(+) + n H(+)(out). Its function is as follows. NDH-1 shuttles electrons from an unknown electron donor, via FMN and iron-sulfur (Fe-S) centers, to quinones in the respiratory and/or the photosynthetic chain. The immediate electron acceptor for the enzyme in this species is believed to be plastoquinone. Couples the redox reaction to proton translocation, and thus conserves the redox energy in a proton gradient. Cyanobacterial NDH-1 also plays a role in inorganic carbon-concentration. This is NAD(P)H-quinone oxidoreductase subunit K 2 from Synechocystis sp. (strain ATCC 27184 / PCC 6803 / Kazusa).